Reading from the N-terminus, the 129-residue chain is Small ribosomal subunit protein uS9 (129 aa).

The protein belongs to the universal ribosomal protein uS9 family.

In Aliarcobacter butzleri (strain RM4018) (Arcobacter butzleri), this protein is Small ribosomal subunit protein uS9.